The primary structure comprises 96 residues: Aspartyl/glutamyl-tRNA(Asn/Gln) amidotransferase subunit C (96 aa).

It belongs to the GatC family. As to quaternary structure, heterotrimer of A, B and C subunits.

The catalysed reaction is L-glutamyl-tRNA(Gln) + L-glutamine + ATP + H2O = L-glutaminyl-tRNA(Gln) + L-glutamate + ADP + phosphate + H(+). The enzyme catalyses L-aspartyl-tRNA(Asn) + L-glutamine + ATP + H2O = L-asparaginyl-tRNA(Asn) + L-glutamate + ADP + phosphate + 2 H(+). In terms of biological role, allows the formation of correctly charged Asn-tRNA(Asn) or Gln-tRNA(Gln) through the transamidation of misacylated Asp-tRNA(Asn) or Glu-tRNA(Gln) in organisms which lack either or both of asparaginyl-tRNA or glutaminyl-tRNA synthetases. The reaction takes place in the presence of glutamine and ATP through an activated phospho-Asp-tRNA(Asn) or phospho-Glu-tRNA(Gln). This Exiguobacterium sp. (strain ATCC BAA-1283 / AT1b) protein is Aspartyl/glutamyl-tRNA(Asn/Gln) amidotransferase subunit C.